Reading from the N-terminus, the 344-residue chain is Ferrochelatase (344 aa).

Residues His-214 and Glu-295 each contribute to the Fe cation site.

Belongs to the ferrochelatase family.

The protein localises to the cytoplasm. It carries out the reaction heme b + 2 H(+) = protoporphyrin IX + Fe(2+). It functions in the pathway porphyrin-containing compound metabolism; protoheme biosynthesis; protoheme from protoporphyrin-IX: step 1/1. Its function is as follows. Catalyzes the ferrous insertion into protoporphyrin IX. The sequence is that of Ferrochelatase from Agrobacterium fabrum (strain C58 / ATCC 33970) (Agrobacterium tumefaciens (strain C58)).